A 95-amino-acid chain; its full sequence is Translation initiation factor IF-1 (95 aa).

The region spanning 1-72 is the S1-like domain; the sequence is MAKEELIEMD…TKARITYRHK (72 aa). Residues 70–95 are disordered; that stretch reads RHKVGGPPGPVTGGGNRPPPRQPRRR. Residues 86–95 show a composition bias toward pro residues; the sequence is RPPPRQPRRR.

It belongs to the IF-1 family. In terms of assembly, component of the 30S ribosomal translation pre-initiation complex which assembles on the 30S ribosome in the order IF-2 and IF-3, IF-1 and N-formylmethionyl-tRNA(fMet); mRNA recruitment can occur at any time during PIC assembly.

The protein resides in the cytoplasm. In terms of biological role, one of the essential components for the initiation of protein synthesis. Stabilizes the binding of IF-2 and IF-3 on the 30S subunit to which N-formylmethionyl-tRNA(fMet) subsequently binds. Helps modulate mRNA selection, yielding the 30S pre-initiation complex (PIC). Upon addition of the 50S ribosomal subunit IF-1, IF-2 and IF-3 are released leaving the mature 70S translation initiation complex. In Rhodospirillum rubrum (strain ATCC 11170 / ATH 1.1.1 / DSM 467 / LMG 4362 / NCIMB 8255 / S1), this protein is Translation initiation factor IF-1.